Reading from the N-terminus, the 482-residue chain is Nuclear transcription factor Y subunit nfya-1 (482 aa).

Residues 1-160 form a disordered region; that stretch reads MNGASRGDVQ…NGSYIQYNEP (160 aa). The segment covering 72 to 93 has biased composition (polar residues); that stretch reads SSPNVQTQCHQPPVVRSQTHQA. Residues 94-110 are compositionally biased toward low complexity; sequence SVSQTTPTQTTPSQYTP. Polar residues-rich tracts occupy residues 126–135 and 144–160; these read HVTPSQQQRI and VSQS…YNEP. The short motif at 306–329 is the Subunit association domain (SAD) element; sequence LVNPKQFNRIMRRREMRQQLEASG. Positions 336–361 form a DNA-binding region, NFYA/HAP2-type; that stretch reads QKYLHESRHLHALKRKRGLDGRFDNT. The disordered stretch occupies residues 344-414; sequence HLHALKRKRG…QPKGGIVNSS (71 aa). A compositionally biased stretch (basic and acidic residues) spans 353–362; that stretch reads GLDGRFDNTK. Over residues 363–375 the composition is skewed to low complexity; it reads TAESSSMVSSTTS.

This sequence belongs to the NFYA/HAP2 subunit family. Forms a heterotrimeric transcription factor complex (nfya-1-NF-Y complex) composed of nfya-1, nfyb-1 and nfyc-1, which binds to 5'-CCAAT-3' box motif in the promoters of its target genes. Interacts with the nfyb-1 and nfyc-1 dimer; the interaction is required for subsequent binding to the 5'-CCAAT-3' box motif in DNA. Does not interact with either nfyb-1 or nfyc-1 in their monomeric form. Interacts with mes-3. In terms of tissue distribution, expressed in certain parts of the gonads with high expression in fertilized oocytes in the uterus and mature oocytes from the distal to the proximal arm of the gonad, but weak expression in the syncytial ovaries and immature oocytes at the beginning of the proximal arm of the gonad. Highly expressed in the head ganglia neurons and the developing hermaphrodite vulva and male tail. Weakly expressed in most somatic cells. Not expressed in the intestine, the hypodermis, body wall muscle surrounding the pseudocoelomic space, secretory cells in the pharyngeal terminal bulb wall, in the small ganglia surrounding the pharynx and in the neurons running anteriorly to the sensory organs in the head.

It is found in the nucleus. Functionally, component of the sequence-specific heterotrimeric transcription factor (nfya-1-NF-Y) which specifically recognizes a 5'-CCAAT-3' box motif found in the promoters of its target genes to regulate their expression and control cellular identity in particular tissue types. In association with the components in the nfya-1-NF-Y complex, represses the expression of the T-box transcription factor tbx-2 throughout larval development, which most likely restricts its expression to certain tissues. May act to repress txb-2 expression in conjunction with tbx-2 itself, which has an autoregulatory role. With the components in this complex, negatively regulates the expression of the homeobox protein egl-5 to spatially restrict its expression in tissues such as the head. May regulate egl-5 expression in association with the mes-2-mes-3-mes-6 complex. This is Nuclear transcription factor Y subunit nfya-1 from Caenorhabditis elegans.